We begin with the raw amino-acid sequence, 234 residues long: Polycomb group RING finger protein 5-A (234 aa).

An RING-type zinc finger spans residues 18 to 57 (CSICRGYLIKPTAVTECLHTFCKSCIVQHFEESNECPECG). Residues 97–130 (FWRKHKIKSNGEDGPRAKKSRLSGEDDDGNGGDY) are disordered.

Component of a PRC1-like complex.

It localises to the nucleus. Its function is as follows. Component of Polycomb group (PcG) multiprotein complexes; the complex class is required to maintain the transcriptionally repressive state of some genes. This is Polycomb group RING finger protein 5-A from Danio rerio (Zebrafish).